The sequence spans 1103 residues: Detocs histidine-protein kinase DtcA (1103 aa).

At His758 the chain carries Phosphohistidine; by autocatalysis. One copy of the TPR repeat lies at 818 to 851 (TIINDAKEKVHINTGEFIESAKVFNYAIEIEFVE).

Autophosphorylated.

It catalyses the reaction ATP + protein L-histidine = ADP + protein N-phospho-L-histidine.. In terms of biological role, sensor-kinase member of the two-component regulatory system Detocs that confers resistance to bacteriophage. When the system (DtcA-DtcB-DtcC) is expressed in a susceptible E.coli (strain MG1655) it confers resistance to bacteriophages T2, T4, T5, T7, SECphi4, SECphi6 and SECphi27; the level of resistance varies, resistance to T2, T7 and SECphi4 is not very high. DtcA (this subunit) probably autophosphorylates upon sensing viral infection, and subsequently transfers the phosphate signal to DtcC which activates it, leading to an antiviral defense; DtcB may scavenge phosphorylation signals from accidental activation of DtcA. The protein is Detocs histidine-protein kinase DtcA of Enterobacter cloacae (strain JD6301).